The chain runs to 330 residues: Chromatin modification-related protein eaf3 (330 aa).

The Tudor-knot domain maps to E13–R66. The segment at A86–A125 is disordered. Residues A100–Q114 are compositionally biased toward basic and acidic residues. Positions T138 to R315 constitute an MRG domain.

This sequence belongs to the MRG family. Component of the NuA4 histone acetyltransferase complex.

The protein resides in the nucleus. Its function is as follows. Involved in deacetylation of histones, chromatin assembly and chromosome segregation. May act as a transcriptional oscillator, directing histone deacetylases to specific chromosomal domains. Component of the NuA4 histone acetyltransferase complex which is involved in transcriptional activation of selected genes principally by acetylation of nucleosomal histone H4 and H2A. The NuA4 complex is also involved in DNA repair. This chain is Chromatin modification-related protein eaf3 (eaf3), found in Aspergillus fumigatus (strain ATCC MYA-4609 / CBS 101355 / FGSC A1100 / Af293) (Neosartorya fumigata).